The sequence spans 615 residues: Elongation factor 4 (615 aa).

Residues 14–200 (SKIRNFCIIA…KVAELIPAPT (187 aa)) enclose the tr-type G domain. Residues 26 to 31 (DHGKST) and 147 to 150 (NKID) each bind GTP.

Belongs to the TRAFAC class translation factor GTPase superfamily. Classic translation factor GTPase family. LepA subfamily.

It localises to the cell membrane. The catalysed reaction is GTP + H2O = GDP + phosphate + H(+). Required for accurate and efficient protein synthesis under certain stress conditions. May act as a fidelity factor of the translation reaction, by catalyzing a one-codon backward translocation of tRNAs on improperly translocated ribosomes. Back-translocation proceeds from a post-translocation (POST) complex to a pre-translocation (PRE) complex, thus giving elongation factor G a second chance to translocate the tRNAs correctly. Binds to ribosomes in a GTP-dependent manner. In Corynebacterium aurimucosum (strain ATCC 700975 / DSM 44827 / CIP 107346 / CN-1) (Corynebacterium nigricans), this protein is Elongation factor 4.